Here is a 2388-residue protein sequence, read N- to C-terminus: Spectrin beta chain, non-erythrocytic 2 (2388 aa).

S2 carries the post-translational modification N-acetylserine. The segment at 2-278 is actin-binding; sequence SSTLSPTDFD…IITYVATYYH (277 aa). Residues S6 and S31 each carry the phosphoserine modification. Calponin-homology (CH) domains lie at 57-161 and 176-281; these read AVQK…LRFQ and KSAK…HYFS. Spectrin repeat units follow at residues 306–414, 427–527, 532–639, 642–744, 749–849, and 856–954; these read LVEK…LALR, AARF…RERL, ELQK…RLEE, RLWR…QRLA, LYQF…RALE, and TMLS…KAAL. Position 959 is a phosphoserine (S959). Spectrin repeat units follow at residues 960-1063, 1066-1169, 1174-1266, 1279-1379, 1384-1485, 1489-1586, 1589-1692, 1696-1797, 1801-1904, 1910-2010, and 2017-2078; these read IQNY…SLGE, RLQD…GRLA, FQGF…NQEA, EQQH…ARSL, RAEL…RRLQ, EQHQ…RLEE, RAQQ…RLQE, LCQL…GQVL, YELQ…QLLL, FRFF…DWLQ, and VFGR…LTAL. Phosphoserine is present on S1073. Position 1574 is a phosphoserine (S1574). Over residues 2080–2096 the composition is skewed to basic and acidic residues; it reads ERENEQKRKREEEERRK. Disordered stretches follow at residues 2080 to 2112 and 2124 to 2207; these read EREN…EGSL and DGTQ…HVAT. Residues 2124 to 2163 are compositionally biased toward polar residues; the sequence is DGTQSKLPPSTQAPSINGVCTDTESSQPLLEQQRLEQSNV. 2 positions are modified to phosphoserine: S2169 and S2199. The region spanning 2218–2328 is the PH domain; the sequence is QEQMEGTLCR…WLRVVNAAIA (111 aa). A disordered region spans residues 2333-2388; that stretch reads ASGEPEEPVVPSASRGLTRAMTMPPVSQPEGSIVLRSKDGREREREKRFSFFKKNK. The residue at position 2354 (T2354) is a Phosphothreonine. S2359 carries the post-translational modification Phosphoserine. A compositionally biased stretch (basic and acidic residues) spans 2368–2381; the sequence is RSKDGREREREKRF.

Belongs to the spectrin family. Abundantly transcribed in the brain. Neurons are the predominant cell-type to express the gene. Found abundantly in Purkinje cells.

It is found in the cytoplasm. It localises to the cytoskeleton. Its subcellular location is the cell cortex. Probably plays an important role in neuronal membrane skeleton. The protein is Spectrin beta chain, non-erythrocytic 2 (Sptbn2) of Rattus norvegicus (Rat).